We begin with the raw amino-acid sequence, 481 residues long: Argininosuccinate synthase (481 aa).

ATP-binding positions include 17–25 (AFSGGLDTS) and alanine 43. Position 99 (tyrosine 99) interacts with L-citrulline. Positions 129 and 131 each coordinate ATP. Residues threonine 131, asparagine 135, and aspartate 136 each coordinate L-aspartate. Asparagine 135 lines the L-citrulline pocket. Residue aspartate 136 participates in ATP binding. The L-citrulline site is built by arginine 139 and serine 192. Aspartate 194 is a binding site for ATP. The L-citrulline site is built by threonine 201, glutamate 203, and glutamate 280.

Belongs to the argininosuccinate synthase family. Type 2 subfamily. Homotetramer.

The protein localises to the cytoplasm. The enzyme catalyses L-citrulline + L-aspartate + ATP = 2-(N(omega)-L-arginino)succinate + AMP + diphosphate + H(+). It functions in the pathway amino-acid biosynthesis; L-arginine biosynthesis; L-arginine from L-ornithine and carbamoyl phosphate: step 2/3. This chain is Argininosuccinate synthase (argG), found in Streptomyces coelicolor (strain ATCC BAA-471 / A3(2) / M145).